We begin with the raw amino-acid sequence, 134 residues long: MSWQTYVDEHLMCDVGDGQGHHLAAAAIFGHDGSVWAQSANFPQFKGQEFANIMKDFDEPGHLAPTGLFLAGAKYMVIQGEPGAVIRGKKGAGGITIKKTGQSCVFGIYEEPVTPGQCNMVVERLGDYLIEQDL.

Belongs to the profilin family. Occurs in many kinds of cells as a complex with monomeric actin in a 1:1 ratio.

It localises to the cytoplasm. The protein localises to the cytoskeleton. Its function is as follows. Binds to actin and affects the structure of the cytoskeleton. At high concentrations, profilin prevents the polymerization of actin, whereas it enhances it at low concentrations. By binding to PIP2, it inhibits the formation of IP3 and DG. The protein is Profilin of Brassica napus (Rape).